Consider the following 462-residue polypeptide: uncharacterized protein (462 aa).

Positions 12, 14, 48, 81, 179, and 202 each coordinate a divalent metal cation. The stretch at 258–291 forms a coiled coil; it reads ESAETKAFLNEKEREAEEKLSDAVAELAQDAEVK.

It belongs to the metallophosphoesterase superfamily. A divalent metal cation serves as cofactor.

This is an uncharacterized protein from Bacillus subtilis (strain 168).